Consider the following 135-residue polypeptide: Cytochrome c-type biogenesis protein CcmE (135 aa).

Residues 1-8 (MLLLRWKR) lie on the Cytoplasmic side of the membrane. Residues 9–29 (FWFLSLGILLFSGVVSLMLFN) form a helical; Signal-anchor for type II membrane protein membrane-spanning segment. The Periplasmic segment spans residues 30 to 135 (LSESISFFYL…EDFIKSVRGE (106 aa)). Residues His118 and Tyr122 each coordinate heme.

It belongs to the CcmE/CycJ family.

Its subcellular location is the cell inner membrane. Its function is as follows. Heme chaperone required for the biogenesis of c-type cytochromes. Transiently binds heme delivered by CcmC and transfers the heme to apo-cytochromes in a process facilitated by CcmF and CcmH. The protein is Cytochrome c-type biogenesis protein CcmE of Neorickettsia sennetsu (strain ATCC VR-367 / Miyayama) (Ehrlichia sennetsu).